A 600-amino-acid polypeptide reads, in one-letter code: Dihydroxy-acid dehydratase (600 aa).

D82 lines the Mg(2+) pocket. C123 provides a ligand contact to [2Fe-2S] cluster. Residues D124 and K125 each coordinate Mg(2+). Position 125 is an N6-carboxylysine (K125). Residue C192 participates in [2Fe-2S] cluster binding. A Mg(2+)-binding site is contributed by E489. Residue S515 is the Proton acceptor of the active site.

It belongs to the IlvD/Edd family. Homodimer. [2Fe-2S] cluster serves as cofactor. Requires Mg(2+) as cofactor.

The enzyme catalyses (2R)-2,3-dihydroxy-3-methylbutanoate = 3-methyl-2-oxobutanoate + H2O. It catalyses the reaction (2R,3R)-2,3-dihydroxy-3-methylpentanoate = (S)-3-methyl-2-oxopentanoate + H2O. The protein operates within amino-acid biosynthesis; L-isoleucine biosynthesis; L-isoleucine from 2-oxobutanoate: step 3/4. It participates in amino-acid biosynthesis; L-valine biosynthesis; L-valine from pyruvate: step 3/4. Functionally, functions in the biosynthesis of branched-chain amino acids. Catalyzes the dehydration of (2R,3R)-2,3-dihydroxy-3-methylpentanoate (2,3-dihydroxy-3-methylvalerate) into 2-oxo-3-methylpentanoate (2-oxo-3-methylvalerate) and of (2R)-2,3-dihydroxy-3-methylbutanoate (2,3-dihydroxyisovalerate) into 2-oxo-3-methylbutanoate (2-oxoisovalerate), the penultimate precursor to L-isoleucine and L-valine, respectively. The chain is Dihydroxy-acid dehydratase from Phocaeicola vulgatus (strain ATCC 8482 / DSM 1447 / JCM 5826 / CCUG 4940 / NBRC 14291 / NCTC 11154) (Bacteroides vulgatus).